Here is a 473-residue protein sequence, read N- to C-terminus: Dolichyl-diphosphooligosaccharide--protein glycosyltransferase subunit 1B (473 aa).

Positions methionine 1–serine 27 are cleaved as a signal peptide. The Lumenal portion of the chain corresponds to proline 28 to proline 439. 2 N-linked (GlcNAc...) asparagine glycosylation sites follow: asparagine 307 and asparagine 361. The helical transmembrane segment at isoleucine 440 to cysteine 460 threads the bilayer. At isoleucine 461–serine 473 the chain is on the cytoplasmic side.

The protein belongs to the OST1 family. Component of the oligosaccharyltransferase (OST) complex.

It localises to the endoplasmic reticulum membrane. The protein operates within protein modification; protein glycosylation. Functionally, subunit of the oligosaccharyl transferase (OST) complex that catalyzes the initial transfer of a defined glycan (Glc(3)Man(9)GlcNAc(2) in eukaryotes) from the lipid carrier dolichol-pyrophosphate to an asparagine residue within an Asn-X-Ser/Thr consensus motif in nascent polypeptide chains, the first step in protein N-glycosylation. N-glycosylation occurs cotranslationally and the complex associates with the Sec61 complex at the channel-forming translocon complex that mediates protein translocation across the endoplasmic reticulum (ER). All subunits are required for a maximal enzyme activity. The sequence is that of Dolichyl-diphosphooligosaccharide--protein glycosyltransferase subunit 1B (OST1B) from Oryza sativa subsp. japonica (Rice).